We begin with the raw amino-acid sequence, 346 residues long: Growth hormone-inducible transmembrane protein (346 aa).

The N-terminal 45 residues, 1–45 (MLAARLVCLRTLPSRVFQPTFITKASPLVKNSITKNQWLVTPSRE), are a transit peptide targeting the mitochondrion. Residues 46 to 83 (YATKTRIRTHRGKTGQELKEAALEPSMEKIFKIDQMGR) are Mitochondrial matrix-facing. Residues 84–104 (WFVAGGAAVGLGALCYYGLGM) form a helical membrane-spanning segment. Over 105–126 (SNEIGAIEKAVIWPQYVKDRIH) the chain is Mitochondrial intermembrane. The chain crosses the membrane as a helical span at residues 127–147 (STYMYLAGSIGLTALSALAVA). At 148 to 160 (RTPALMNFMMTGS) the chain is on the mitochondrial matrix side. The helical transmembrane segment at 161-181 (WVTIGATFAAMIGAGMLVHSI) threads the bilayer. Over 182–191 (SYEQSPGPKH) the chain is Mitochondrial intermembrane. A helical membrane pass occupies residues 192-212 (LAWMLHSGVMGAVVAPLTILG). Residues 213-214 (GP) are Mitochondrial matrix-facing. Residues 215 to 235 (LLLRAAWYTAGIVGGLSTVAM) form a helical membrane-spanning segment. Topologically, residues 236 to 245 (CAPSEKFLNM) are mitochondrial intermembrane. A helical membrane pass occupies residues 246-266 (GAPLGVGLGLVFASSLGSMFL). Topologically, residues 267–272 (PPTSVA) are mitochondrial matrix. The helical transmembrane segment at 273–293 (GATLYSVAMYGGLVLFSMFLL) threads the bilayer. The Mitochondrial intermembrane segment spans residues 294–346 (YDTQKVIKRAEITPMYGAQKYDPINSMLTIYMDTLNIFMRVATMLATGSNRKK).

It belongs to the BI1 family. Interacts with LETM1 and AFG3L2. Undergoes AFG3L2-mediated proteolytic degradation, upon hyperpolarization of mitochondria.

The protein localises to the mitochondrion inner membrane. It catalyses the reaction Ca(2+)(in) + 2 H(+)(out) = Ca(2+)(out) + 2 H(+)(in). It carries out the reaction K(+)(in) + H(+)(out) = K(+)(out) + H(+)(in). Functionally, plays an important role in maintenance of mitochondrial morphology and in mediating either calcium or potassium/proton antiport. Mediates proton-dependent calcium efflux from mitochondrion. Also functions as an electroneutral mitochondrial proton/potassium exchanger. Required for the mitochondrial tubular network and cristae organization. Involved in apoptotic release of cytochrome c. Inhibits AFG3L2 proteolytic activity, stimulating respiration and stabilizing respiratory enzymes in actively respiring mitochondria. However, when mitochondria become hyperpolarized, GHITM loses its inhibitory activity toward AFG3L2 and the now active AFG3L2 turns first on GHITM and, if hyperpolarization persists, on other proteins of the mitochondria, leading to a broad remodeling of the mitochondrial proteome. This is Growth hormone-inducible transmembrane protein (Ghitm) from Mus musculus (Mouse).